Consider the following 166-residue polypeptide: MYIDTSELCDIYLDQVDVVEPIFSSFGGVNRFYGKVTTVKCFENNGLITDILEENGEGRVLLIDGGGAVRRALVDAELAQLAVDNGWEGIIVYGAVRQIQQLEEMDIGIHALAPIPVGADKQNIGEIDVPVNFGGVTFFPEDYVYADLTGIILSQEPLELDEFNDA.

The protein belongs to the RraA family. Homotrimer. Binds to both RNA-binding sites in the C-terminal region of Rne and to RhlB.

It is found in the cytoplasm. In terms of biological role, globally modulates RNA abundance by binding to RNase E (Rne) and regulating its endonucleolytic activity. Can modulate Rne action in a substrate-dependent manner by altering the composition of the degradosome. Modulates RNA-binding and helicase activities of the degradosome. This Pasteurella multocida (strain Pm70) protein is Regulator of ribonuclease activity A.